Here is a 76-residue protein sequence, read N- to C-terminus: Conotoxin Cal29b (76 aa).

The signal sequence occupies residues 1-43; it reads MKLTCVLIVAVLILAACQFTAANMARYGKTQIARSDVKSIDAR.

It belongs to the conotoxin O1 superfamily. Post-translationally, may contain 4 disulfide bonds. In terms of tissue distribution, expressed by the venom duct.

It is found in the secreted. Functionally, is able to inhibit the growth of Mycobacterium tuberculosis (MIC=0.22-3.52 uM against strain H37Rv and 2 multidrug-resistant strains). May also show neurotoxic activity. The polypeptide is Conotoxin Cal29b (Californiconus californicus (California cone)).